The following is a 142-amino-acid chain: Glia maturation factor beta (142 aa).

Residue Ser-2 is modified to N-acetylserine. The 136-residue stretch at Ser-4–Gly-139 folds into the ADF-H domain.

The protein belongs to the actin-binding proteins ADF family. GMF subfamily. Phosphorylated; stimulated by phorbol ester.

In terms of biological role, this protein causes differentiation of brain cells, stimulation of neural regeneration, and inhibition of proliferation of tumor cells. The protein is Glia maturation factor beta (GMFB) of Homo sapiens (Human).